A 198-amino-acid chain; its full sequence is FMN-dependent NADH:quinone oxidoreductase (198 aa).

FMN contacts are provided by residues serine 10, 16 to 18 (SQS), 94 to 97 (MYNF), and 138 to 141 (TRGG).

It belongs to the azoreductase type 1 family. In terms of assembly, homodimer. The cofactor is FMN.

It catalyses the reaction 2 a quinone + NADH + H(+) = 2 a 1,4-benzosemiquinone + NAD(+). The catalysed reaction is N,N-dimethyl-1,4-phenylenediamine + anthranilate + 2 NAD(+) = 2-(4-dimethylaminophenyl)diazenylbenzoate + 2 NADH + 2 H(+). Quinone reductase that provides resistance to thiol-specific stress caused by electrophilic quinones. Functionally, also exhibits azoreductase activity. Catalyzes the reductive cleavage of the azo bond in aromatic azo compounds to the corresponding amines. The chain is FMN-dependent NADH:quinone oxidoreductase from Shewanella sp. (strain MR-4).